The chain runs to 295 residues: Bifunctional protein FolD (295 aa).

Residues 163–165, S188, and I229 each bind NADP(+); that span reads GRS.

Belongs to the tetrahydrofolate dehydrogenase/cyclohydrolase family. As to quaternary structure, homodimer.

It catalyses the reaction (6R)-5,10-methylene-5,6,7,8-tetrahydrofolate + NADP(+) = (6R)-5,10-methenyltetrahydrofolate + NADPH. It carries out the reaction (6R)-5,10-methenyltetrahydrofolate + H2O = (6R)-10-formyltetrahydrofolate + H(+). It participates in one-carbon metabolism; tetrahydrofolate interconversion. Its function is as follows. Catalyzes the oxidation of 5,10-methylenetetrahydrofolate to 5,10-methenyltetrahydrofolate and then the hydrolysis of 5,10-methenyltetrahydrofolate to 10-formyltetrahydrofolate. The polypeptide is Bifunctional protein FolD (Hyphomonas neptunium (strain ATCC 15444)).